The chain runs to 225 residues: NAD(P)H-quinone oxidoreductase subunit K, chloroplastic (225 aa).

Positions 43, 44, 108, and 139 each coordinate [4Fe-4S] cluster.

It belongs to the complex I 20 kDa subunit family. In terms of assembly, NDH is composed of at least 16 different subunits, 5 of which are encoded in the nucleus. The cofactor is [4Fe-4S] cluster.

It localises to the plastid. Its subcellular location is the chloroplast thylakoid membrane. The enzyme catalyses a plastoquinone + NADH + (n+1) H(+)(in) = a plastoquinol + NAD(+) + n H(+)(out). It carries out the reaction a plastoquinone + NADPH + (n+1) H(+)(in) = a plastoquinol + NADP(+) + n H(+)(out). NDH shuttles electrons from NAD(P)H:plastoquinone, via FMN and iron-sulfur (Fe-S) centers, to quinones in the photosynthetic chain and possibly in a chloroplast respiratory chain. The immediate electron acceptor for the enzyme in this species is believed to be plastoquinone. Couples the redox reaction to proton translocation, and thus conserves the redox energy in a proton gradient. This is NAD(P)H-quinone oxidoreductase subunit K, chloroplastic from Olimarabidopsis pumila (Dwarf rocket).